The sequence spans 432 residues: Adenylosuccinate synthetase (432 aa).

GTP contacts are provided by residues 13–19 and 41–43; these read GDEGKGK and GHT. The active-site Proton acceptor is the Asp-14. Residues Asp-14 and Gly-41 each contribute to the Mg(2+) site. IMP-binding positions include 14-17, 39-42, Thr-130, Arg-144, Gln-225, Thr-240, and Arg-304; these read DEGK and NAGH. Catalysis depends on His-42, which acts as the Proton donor. 300–306 contributes to the substrate binding site; that stretch reads ATTGRSR. Residues Arg-306, 332 to 334, and 415 to 417 each bind GTP; these read KLD and STG.

Belongs to the adenylosuccinate synthetase family. In terms of assembly, homodimer. Requires Mg(2+) as cofactor.

It is found in the cytoplasm. The enzyme catalyses IMP + L-aspartate + GTP = N(6)-(1,2-dicarboxyethyl)-AMP + GDP + phosphate + 2 H(+). The protein operates within purine metabolism; AMP biosynthesis via de novo pathway; AMP from IMP: step 1/2. Its function is as follows. Plays an important role in the de novo pathway of purine nucleotide biosynthesis. Catalyzes the first committed step in the biosynthesis of AMP from IMP. The protein is Adenylosuccinate synthetase of Marinomonas sp. (strain MWYL1).